A 201-amino-acid chain; its full sequence is MKTVLLATNNENKVNEIKDILCELNLKVVSLKEVGINVEVEEDELTFMGNALKKALTLYNMIDDKKYMVLADDSGLSVDVLGGAPGVFSARYAGEHGNSKANNEKLLEDMKGLKNRKGKFICAMALVIDKDNIIKVQGEVEGSIGYEEKGDNGFGYDPLFFVSKYNMTFAEMDKDIKNSISHRRDALNKIKEKLKSYIEDK.

8 to 13 (TNNENK) contacts substrate. The Mg(2+) site is built by E41 and D73. The active-site Proton acceptor is D73. Substrate is bound by residues S74, 154–157 (FGYD), K177, and 182–183 (HR).

Belongs to the HAM1 NTPase family. Homodimer. Mg(2+) is required as a cofactor.

The catalysed reaction is XTP + H2O = XMP + diphosphate + H(+). It carries out the reaction dITP + H2O = dIMP + diphosphate + H(+). It catalyses the reaction ITP + H2O = IMP + diphosphate + H(+). Functionally, pyrophosphatase that catalyzes the hydrolysis of nucleoside triphosphates to their monophosphate derivatives, with a high preference for the non-canonical purine nucleotides XTP (xanthosine triphosphate), dITP (deoxyinosine triphosphate) and ITP. Seems to function as a house-cleaning enzyme that removes non-canonical purine nucleotides from the nucleotide pool, thus preventing their incorporation into DNA/RNA and avoiding chromosomal lesions. This Clostridium tetani (strain Massachusetts / E88) protein is dITP/XTP pyrophosphatase.